The chain runs to 222 residues: Eukaryotic translation initiation factor 3 subunit K (222 aa).

The region spanning 46-208 (YDLEANLAVL…KIKTKNITEK (163 aa)) is the PCI domain.

This sequence belongs to the eIF-3 subunit K family. As to quaternary structure, component of the eukaryotic translation initiation factor 3 (eIF-3) complex. The eIF-3 complex interacts with pix.

The protein resides in the cytoplasm. Its function is as follows. Component of the eukaryotic translation initiation factor 3 (eIF-3) complex, which is involved in protein synthesis of a specialized repertoire of mRNAs and, together with other initiation factors, stimulates binding of mRNA and methionyl-tRNAi to the 40S ribosome. The eIF-3 complex specifically targets and initiates translation of a subset of mRNAs involved in cell proliferation. This chain is Eukaryotic translation initiation factor 3 subunit K, found in Drosophila erecta (Fruit fly).